Consider the following 184-residue polypeptide: Gremlin-1 (184 aa).

A signal peptide spans 1 to 24; sequence MVRTLYAIGAVFLLTGFLLPTAEG. Residues 24–77 form a disordered region; the sequence is GRKRNRGSQGAIPPPDKDQPNDSEQMQTQQQSGSRHRERGKGTSMPAEEVLESS. Asparagine 44 carries N-linked (GlcNAc...) asparagine glycosylation. A compositionally biased stretch (polar residues) spans 45 to 56; that stretch reads DSEQMQTQQQSG. 4 disulfide bridges follow: cysteine 94–cysteine 144, cysteine 108–cysteine 158, cysteine 118–cysteine 176, and cysteine 122–cysteine 178. In terms of domain architecture, CTCK spans 94-184; it reads CKTQPLKQTI…ECRCISIDLD (91 aa).

This sequence belongs to the DAN family.

The protein resides in the secreted. Its function is as follows. Cytokine that may play a role in the development of the medial pallium and during optic nerve and pecten development by modulating BMP signaling. This chain is Gremlin-1 (GREM1), found in Gallus gallus (Chicken).